The primary structure comprises 155 residues: MNIRIGQGFDSHKLKTKKNSRVFLGGIPVRTDQQLIANSDGDVVLHALSDAVLGCGSFGDIGMYFDENDLSNKGLDSKTILNYCLKLIKKLKLEFVNIDLTIFAQDIRIDPIRFEIKSSLMKLTGCNSVNVKAKSYEEPKNEIACSCVVLMNTNK.

Residues Asp-10, His-12, and His-46 each coordinate a divalent metal cation. 4-CDP-2-C-methyl-D-erythritol 2-phosphate is bound at residue 10 to 12; the sequence is DSH. 4-CDP-2-C-methyl-D-erythritol 2-phosphate-binding positions include 60 to 62, 65 to 69, and Lys-140; these read DIG and FDEND.

It belongs to the IspF family. In terms of assembly, homotrimer. The cofactor is a divalent metal cation.

It catalyses the reaction 4-CDP-2-C-methyl-D-erythritol 2-phosphate = 2-C-methyl-D-erythritol 2,4-cyclic diphosphate + CMP. The protein operates within isoprenoid biosynthesis; isopentenyl diphosphate biosynthesis via DXP pathway; isopentenyl diphosphate from 1-deoxy-D-xylulose 5-phosphate: step 4/6. Involved in the biosynthesis of isopentenyl diphosphate (IPP) and dimethylallyl diphosphate (DMAPP), two major building blocks of isoprenoid compounds. Catalyzes the conversion of 4-diphosphocytidyl-2-C-methyl-D-erythritol 2-phosphate (CDP-ME2P) to 2-C-methyl-D-erythritol 2,4-cyclodiphosphate (ME-CPP) with a corresponding release of cytidine 5-monophosphate (CMP). This chain is 2-C-methyl-D-erythritol 2,4-cyclodiphosphate synthase, found in Mycoplasmoides gallisepticum (strain R(low / passage 15 / clone 2)) (Mycoplasma gallisepticum).